Reading from the N-terminus, the 192-residue chain is E3 ubiquitin-protein ligase RNF183 (192 aa).

Over 1–161 (MAEQQGRELE…RECFRNPQFR (161 aa)) the chain is Cytoplasmic. Residues 13–60 (CPVCWNPFNNTFHTPKMLDCCHSFCVECLAHLSLVTPARRRLLCPLCR) form an RING-type zinc finger. The helical; Anchor for type IV membrane protein transmembrane segment at 162–182 (IFAYLMAVILSVTLLLIFSIF) threads the bilayer. Over 183–192 (WTKQFLWGVG) the chain is Lumenal.

In terms of assembly, interacts with FATE1. Interacts with SEC16A. Interacts with BCL2L1. Post-translationally, autoubiquitinated (in vitro). In terms of tissue distribution, kidney and testis.

It is found in the endoplasmic reticulum membrane. The protein resides in the endoplasmic reticulum. It localises to the golgi apparatus. Its subcellular location is the cis-Golgi network membrane. The protein localises to the lysosome membrane. The enzyme catalyses S-ubiquitinyl-[E2 ubiquitin-conjugating enzyme]-L-cysteine + [acceptor protein]-L-lysine = [E2 ubiquitin-conjugating enzyme]-L-cysteine + N(6)-ubiquitinyl-[acceptor protein]-L-lysine.. It functions in the pathway protein modification; protein ubiquitination. Its function is as follows. Acts as an E3 ubiquitin ligase catalyzing the covalent attachment of ubiquitin moieties onto substrate proteins. Triggers apoptosis in response to prolonged ER stress by mediating the polyubiquitination and subsequent proteasomal degradation of BCL2L1. May collaborate with FATE1 to restrain BIK protein levels thus regulating apoptotic signaling. The protein is E3 ubiquitin-protein ligase RNF183 (RNF183) of Homo sapiens (Human).